The primary structure comprises 136 residues: Cytidine deaminase (136 aa).

A CMP/dCMP-type deaminase domain is found at 1–128 (MNRQELITEA…ELLPGAFSSE (128 aa)). 42–44 (NIE) is a binding site for substrate. Position 53 (Cys53) interacts with Zn(2+). Glu55 acts as the Proton donor in catalysis. Cys86 and Cys89 together coordinate Zn(2+).

The protein belongs to the cytidine and deoxycytidylate deaminase family. Homotetramer. Zn(2+) is required as a cofactor.

It carries out the reaction cytidine + H2O + H(+) = uridine + NH4(+). The enzyme catalyses 2'-deoxycytidine + H2O + H(+) = 2'-deoxyuridine + NH4(+). In terms of biological role, this enzyme scavenges exogenous and endogenous cytidine and 2'-deoxycytidine for UMP synthesis. The polypeptide is Cytidine deaminase (cdd) (Bacillus subtilis (strain 168)).